The primary structure comprises 158 residues: Cell number regulator 11 (158 aa).

Transmembrane regions (helical) follow at residues 49–67 (FGDLHTCCLTLWCPCVTFG) and 78–94 (TCCMSGTLYYLLSTIGW).

This sequence belongs to the cornifelin family.

It localises to the membrane. The sequence is that of Cell number regulator 11 (CNR11) from Zea mays (Maize).